Consider the following 141-residue polypeptide: Hemoglobin subunit alpha (141 aa).

The Globin domain maps to 1 to 141 (VLSPADKTNV…VSTVLTSKYR (141 aa)). Ser-3 is subject to Phosphoserine. N6-succinyllysine is present on Lys-7. At Thr-8 the chain carries Phosphothreonine. An N6-succinyllysine modification is found at Lys-11. Lys-16 is subject to N6-acetyllysine; alternate. Lys-16 carries the N6-succinyllysine; alternate modification. Tyr-24 carries the phosphotyrosine modification. Ser-35 carries the phosphoserine modification. An N6-succinyllysine modification is found at Lys-40. The residue at position 49 (Ser-49) is a Phosphoserine. An O2-binding site is contributed by His-58. His-87 contributes to the heme b binding site. Ser-102 is modified (phosphoserine). The residue at position 108 (Thr-108) is a Phosphothreonine. A Phosphoserine modification is found at Ser-124. Phosphothreonine occurs at positions 134 and 137. Ser-138 bears the Phosphoserine mark.

The protein belongs to the globin family. As to quaternary structure, heterotetramer of two alpha chains and two beta chains. Red blood cells.

Functionally, involved in oxygen transport from the lung to the various peripheral tissues. In terms of biological role, hemopressin acts as an antagonist peptide of the cannabinoid receptor CNR1. Hemopressin-binding efficiently blocks cannabinoid receptor CNR1 and subsequent signaling. The polypeptide is Hemoglobin subunit alpha (HBA) (Odobenus rosmarus divergens (Pacific walrus)).